The sequence spans 368 residues: Protein RecA (368 aa).

72–79 (GNESSGKT) is an ATP binding site.

This sequence belongs to the RecA family.

It localises to the cytoplasm. Can catalyze the hydrolysis of ATP in the presence of single-stranded DNA, the ATP-dependent uptake of single-stranded DNA by duplex DNA, and the ATP-dependent hybridization of homologous single-stranded DNAs. It interacts with LexA causing its activation and leading to its autocatalytic cleavage. This Petrotoga mobilis (strain DSM 10674 / SJ95) protein is Protein RecA.